The primary structure comprises 186 residues: Transcription factor FapR (186 aa).

It belongs to the FapR family.

In terms of biological role, transcriptional factor involved in regulation of membrane lipid biosynthesis by repressing genes involved in fatty acid and phospholipid metabolism. This Halalkalibacterium halodurans (strain ATCC BAA-125 / DSM 18197 / FERM 7344 / JCM 9153 / C-125) (Bacillus halodurans) protein is Transcription factor FapR.